A 319-amino-acid polypeptide reads, in one-letter code: 1-aminocyclopropane-1-carboxylate oxidase 1 (319 aa).

Positions 153-253 constitute a Fe2OG dioxygenase domain; the sequence is PNFGTKVSNY…RMSLASFYNP (101 aa). H177, D179, and H234 together coordinate Fe cation.

The protein belongs to the iron/ascorbate-dependent oxidoreductase family. The cofactor is Fe cation.

It carries out the reaction 1-aminocyclopropane-1-carboxylate + L-ascorbate + O2 = ethene + L-dehydroascorbate + hydrogen cyanide + CO2 + 2 H2O. The protein operates within alkene biosynthesis; ethylene biosynthesis via S-adenosyl-L-methionine; ethylene from S-adenosyl-L-methionine: step 2/2. This Petunia hybrida (Petunia) protein is 1-aminocyclopropane-1-carboxylate oxidase 1 (ACO1).